Consider the following 373-residue polypeptide: Enoyl-[acyl-carrier-protein] reductase, mitochondrial (373 aa).

The N-terminal 53 residues, 1–53 (MLVSRRLTGARARAPLLASLLEAWCRQGRTTSSYSAFSEPSHVRALVYGNHGD), are a transit peptide targeting the mitochondrion. Residue Lys-61 is modified to N6-acetyllysine; alternate. At Lys-61 the chain carries N6-succinyllysine; alternate. The active-site Proton donor is Tyr-94. Residues Asn-167, 193–196 (NSGV), and 216–218 (RDR) each bind NADP(+). Residues Lys-252 and Lys-267 each carry the N6-acetyllysine; alternate modification. Residues Lys-252 and Lys-267 each carry the N6-succinyllysine; alternate modification. Residues 285–288 (YGGM) and 310–312 (FWL) contribute to the NADP(+) site. Lys-316 carries the N6-succinyllysine modification. Lys-368 is an NADP(+) binding site.

This sequence belongs to the zinc-containing alcohol dehydrogenase family. Quinone oxidoreductase subfamily. As to quaternary structure, homodimer. Interacts with PPARA in the nucleus and increases its activity.

The protein resides in the mitochondrion. The protein localises to the cytoplasm. Its subcellular location is the nucleus. The catalysed reaction is a 2,3-saturated acyl-[ACP] + NADP(+) = a (2E)-enoyl-[ACP] + NADPH + H(+). The enzyme catalyses (2E)-butenoyl-[ACP] + NADPH + H(+) = butanoyl-[ACP] + NADP(+). It carries out the reaction (2E)-hexenoyl-[ACP] + NADPH + H(+) = hexanoyl-[ACP] + NADP(+). It catalyses the reaction (2E)-octenoyl-[ACP] + NADPH + H(+) = octanoyl-[ACP] + NADP(+). The catalysed reaction is (2E)-decenoyl-[ACP] + NADPH + H(+) = decanoyl-[ACP] + NADP(+). The enzyme catalyses (2E)-dodecenoyl-[ACP] + NADPH + H(+) = dodecanoyl-[ACP] + NADP(+). It carries out the reaction (2E)-tetradecenoyl-[ACP] + NADPH + H(+) = tetradecanoyl-[ACP] + NADP(+). It catalyses the reaction (2E)-hexadecenoyl-[ACP] + NADPH + H(+) = hexadecanoyl-[ACP] + NADP(+). Functionally, catalyzes the NADPH-dependent reduction of trans-2-enoyl thioesters in mitochondrial fatty acid synthesis (fatty acid synthesis type II). Fatty acid chain elongation in mitochondria uses acyl carrier protein (ACP) as an acyl group carrier, but the enzyme accepts both ACP and CoA thioesters as substrates in vitro. Displays a preference for medium-chain over short- and long-chain substrates. May provide the octanoyl chain used for lipoic acid biosynthesis, regulating protein lipoylation and mitochondrial respiratory activity particularly in Purkinje cells. Involved in iron homeostasis; affecting Fe-S cluster assembly and ceramide metabolism. Required for proper morphology and bioenergetic functions of mitochondria. Required for maintenance of neurons. This Rattus norvegicus (Rat) protein is Enoyl-[acyl-carrier-protein] reductase, mitochondrial (Mecr).